Reading from the N-terminus, the 376-residue chain is Lipid-A-disaccharide synthase (376 aa).

It belongs to the LpxB family.

It carries out the reaction a lipid X + a UDP-2-N,3-O-bis[(3R)-3-hydroxyacyl]-alpha-D-glucosamine = a lipid A disaccharide + UDP + H(+). The protein operates within bacterial outer membrane biogenesis; LPS lipid A biosynthesis. Functionally, condensation of UDP-2,3-diacylglucosamine and 2,3-diacylglucosamine-1-phosphate to form lipid A disaccharide, a precursor of lipid A, a phosphorylated glycolipid that anchors the lipopolysaccharide to the outer membrane of the cell. The protein is Lipid-A-disaccharide synthase of Coxiella burnetii (strain CbuK_Q154) (Coxiella burnetii (strain Q154)).